A 400-amino-acid chain; its full sequence is MCSENFKKFLVSEASGGIFLIAAAVIAMVFQNGFLSEFYNSFLHIDMGFKFGEFLLQKPLILWVNDGLMAIFFFVLGLELKREILEGELRNPAQVVLPAVGAIGGIVVPAFIFYLFNHTDSFAARGWAIPTATDTAFALGIIMILGARVPASLKIFLVTLAIIDDVCAILIMAIFYSGDLSLISFGVAAIVILGLLALNLLNVNKKSFYLILGIILWISVLKSGVHATLAGVISAFFIPLKCKNSDKSLLKEIEHDLHGYITYFVLPVFAFVNAGISLKGIGLEQLTHPVSLGVILGLFLGKQIGVFGFCFVAIKLGFAKLPKYSCWISFYGLCILTGIGFTMSLFINSLSYNDTDKFAYADKLSVLIASVISGVLGYIVLYIASVRKEKIEVKAQNESF.

Helical transmembrane passes span 9-29, 60-80, 96-116, 127-147, 155-175, 180-200, 210-230, 263-283, 294-314, 327-347, and 366-386; these read FLVS…IAMV, LILW…GLEL, VLPA…FYLF, WAIP…ILGA, IFLV…MAIF, LSLI…ALNL, LILG…ATLA, YFVL…GIGL, VILG…FVAI, WISF…SLFI, and VLIA…IASV.

This sequence belongs to the NhaA Na(+)/H(+) (TC 2.A.33) antiporter family.

It is found in the cell inner membrane. The enzyme catalyses Na(+)(in) + 2 H(+)(out) = Na(+)(out) + 2 H(+)(in). In terms of biological role, na(+)/H(+) antiporter that extrudes sodium in exchange for external protons. The sequence is that of Na(+)/H(+) antiporter NhaA from Campylobacter curvus (strain 525.92).